The chain runs to 1460 residues: Venom prothrombin activator omicarin-C non-catalytic subunit (1460 aa).

Positions 1-30 (MGRYSVSPVPKCLLLMFLGWSGLKYYQVNA) are cleaved as a signal peptide. 4 Plastocyanin-like domains span residues 32 to 196 (QLRE…LLIC), 206 to 330 (AQKF…LNIK), 351 to 529 (MNWE…LLVC), and 539 to 685 (VQNK…FLDA). F5/8 type A domains lie at 32-330 (QLRE…LNIK) and 350-685 (IMNW…FLDA). The Ca(2+) site is built by lysine 124, glutamate 139, aspartate 142, and aspartate 143. The N-linked (GlcNAc...) asparagine glycan is linked to asparagine 156. Cysteine 170 and cysteine 196 form a disulfide bridge. Asparagine 242, asparagine 300, asparagine 385, asparagine 406, and asparagine 471 each carry an N-linked (GlcNAc...) asparagine glycan. Residues cysteine 251 and cysteine 332 are joined by a disulfide bond. A disulfide bridge links cysteine 503 with cysteine 529. An N-linked (GlcNAc...) asparagine glycan is attached at asparagine 557. Intrachain disulfides connect cysteine 672–cysteine 1031, cysteine 965–cysteine 991, cysteine 1147–cysteine 1298, and cysteine 1303–cysteine 1457. Positions 693–817 (GNEEEEEDDG…SDDIAGRYLR (125 aa)) are b. A disordered region spans residues 740-760 (LLDDEDNPEQSRSEQTEDDEE). Residues 772 to 817 (SFKGSVAEEELKHTALALEEDAHASDPRIDSNSARNSDDIAGRYLR) constitute a propeptide, activation peptide (connecting region). 2 Plastocyanin-like domains span residues 823–991 (NKRR…ILIC) and 1000–1143 (NRTI…FTVI). An F5/8 type A 3 domain is found at 823–1143 (NKRRYYIAAE…RGMQALFTVI (321 aa)). 4 residues coordinate Ca(2+): lysine 919, phenylalanine 934, aspartate 937, and aspartate 938. Asparagine 943 carries N-linked (GlcNAc...) asparagine glycosylation. N-linked (GlcNAc...) asparagine glycosylation is found at asparagine 1000, asparagine 1180, and asparagine 1397. F5/8 type C domains follow at residues 1147–1298 (CKLP…LLGC) and 1303–1457 (CSVP…LFGC).

The protein belongs to the multicopper oxidase family. As to quaternary structure, heterodimer of a light and a heavy chains; non-disulfide-linked. The interaction between the two chains is calcium-dependent. Found in its active form associated with omicarin-C catalytic subunit (AC Q58L95). In physiological conditions, blood coagulation factor V and factor Va are inactivated by activated protein C (APC) through proteolytic degradation of the heavy chain. However, omicarin-C non-catalytic subunit (factor V-like protein) retains its full activity even at high concentration of APC. This has two explanations: this protein has only one of the three cleavage sites present in factor V that are targeted by the APC for inactivation, and the binding with the catalytic subunit protect the cleavage site from inactivation. Expressed by the venom gland.

It localises to the secreted. Snake prothrombin activator that attacks the hemostatic system of prey. This non-catalytic subunit is functionally similar to blood coagulation factor V. It serves as a critical cofactor for the prothrombinase activity of the catalytic subunit, which is similar to the blood coagulation factor X. The complex converts prothrombin to thrombin by sequential cleavage at two positions, Arg-320 followed by Arg-271. Cleavage at Arg-320 produces an active intermediate known as meizothrombin. Meizothrombin is the 'second' substrate for prothrombinase, and it docks in an altered manner to present the second cleavage site (271). Cleavage at Arg-271 releases active thrombin from its pro-fragment. This order of events is reversed if the protease component of prothrombinase is used on its own, suggesting that the 271 site is inherently more accessible to proteolysis. This Oxyuranus microlepidotus (Inland taipan) protein is Venom prothrombin activator omicarin-C non-catalytic subunit.